A 473-amino-acid chain; its full sequence is Proline--tRNA ligase (473 aa).

This sequence belongs to the class-II aminoacyl-tRNA synthetase family. ProS type 3 subfamily. Homodimer.

The protein resides in the cytoplasm. It carries out the reaction tRNA(Pro) + L-proline + ATP = L-prolyl-tRNA(Pro) + AMP + diphosphate. Functionally, catalyzes the attachment of proline to tRNA(Pro) in a two-step reaction: proline is first activated by ATP to form Pro-AMP and then transferred to the acceptor end of tRNA(Pro). The protein is Proline--tRNA ligase of Mesoplasma florum (strain ATCC 33453 / NBRC 100688 / NCTC 11704 / L1) (Acholeplasma florum).